Reading from the N-terminus, the 462-residue chain is Cysteine--tRNA ligase (462 aa).

Cys24 contacts Zn(2+). The 'HIGH' region signature appears at 26–36 (PTVYDDAHLGH). Cys199, His224, and Glu228 together coordinate Zn(2+). The short motif at 256–260 (KMSKS) is the 'KMSKS' region element. Lys259 is an ATP binding site.

The protein belongs to the class-I aminoacyl-tRNA synthetase family. Monomer. The cofactor is Zn(2+).

Its subcellular location is the cytoplasm. The enzyme catalyses tRNA(Cys) + L-cysteine + ATP = L-cysteinyl-tRNA(Cys) + AMP + diphosphate. This chain is Cysteine--tRNA ligase, found in Campylobacter jejuni subsp. doylei (strain ATCC BAA-1458 / RM4099 / 269.97).